A 218-amino-acid chain; its full sequence is N-(5'-phosphoribosyl)anthranilate isomerase (218 aa).

It belongs to the TrpF family.

It catalyses the reaction N-(5-phospho-beta-D-ribosyl)anthranilate = 1-(2-carboxyphenylamino)-1-deoxy-D-ribulose 5-phosphate. The protein operates within amino-acid biosynthesis; L-tryptophan biosynthesis; L-tryptophan from chorismate: step 3/5. The chain is N-(5'-phosphoribosyl)anthranilate isomerase from Lachnoclostridium phytofermentans (strain ATCC 700394 / DSM 18823 / ISDg) (Clostridium phytofermentans).